Here is a 386-residue protein sequence, read N- to C-terminus: Heat-inducible transcription repressor HrcA (386 aa).

The protein belongs to the HrcA family.

Functionally, negative regulator of class I heat shock genes (grpE-dnaK-dnaJ and groELS operons). Prevents heat-shock induction of these operons. The protein is Heat-inducible transcription repressor HrcA of Chlamydia felis (strain Fe/C-56) (Chlamydophila felis).